A 533-amino-acid chain; its full sequence is Calcitonin receptor (533 aa).

Residues 1-41 (MTPRRSRVKRRNLRKPKMRFLLVNRFTLLLLLLVSPTPVLQ) form the signal peptide. Topologically, residues 42–163 (APTNLTDSGL…FTSEKLQNAY (122 aa)) are extracellular. N-linked (GlcNAc...) asparagine glycans are attached at residues Asn-45, Asn-90, Asn-142, and Asn-147. Cystine bridges form between Cys-72-Cys-98, Cys-89-Cys-129, and Cys-112-Cys-151. The chain crosses the membrane as a helical span at residues 164–186 (VLYYLALVGHSLSIAALVASMLI). Topologically, residues 187–198 (FWIFKNLSCQRV) are cytoplasmic. The helical transmembrane segment at 199–219 (TLHKHMFLTYILNSIIIIIHL) threads the bilayer. Over 220–273 (VEVVPNGDLVRRDPMHIFHHNTHMWTMQWELSPPLPLSAHEGKMDPHASEVISC) the chain is Extracellular. Cys-273 and Cys-343 are oxidised to a cystine. A helical membrane pass occupies residues 274–296 (KVLHFLHQYMMSCNYFWMLCEGI). The Cytoplasmic segment spans residues 297-313 (YLHTLIVMAVFTDEQRL). A helical membrane pass occupies residues 314–334 (RWYYLLGWGFPIVPTIIHAIT). The Extracellular segment spans residues 335–350 (RALYYNDNCWLSAETH). The chain crosses the membrane as a helical span at residues 351-374 (LLYIIHGPVMVALVVNFFFLLNIV). At 375 to 394 (RVLVTKMRQTHEAESYMYLK) the chain is on the cytoplasmic side. A helical membrane pass occupies residues 395-413 (AVKATMVLVPLLGIQFVVF). The Extracellular portion of the chain corresponds to 414–421 (PWRPSNKV). A helical transmembrane segment spans residues 422 to 448 (LGKIYDYLMHSLIHFQGFFVATIYCFC). Residues 449 to 533 (NHEVQVTLKR…MNVIQQDASA (85 aa)) are Cytoplasmic-facing.

Belongs to the G-protein coupled receptor 2 family. In terms of assembly, heterodimer of CALCR and RAMP1, RAMP2 or RAMP3; the receptor complexes function as AMYR1, AMYR2 and AMYR3 receptors, respectively, and respond to amylin/IAPP, calcitonin/CT and CGRP1 ligands. Interacts with GPRASP2.

It is found in the cell membrane. Functionally, g protein-coupled receptor activated by ligand peptides amylin (IAPP), calcitonin (CT/CALCA) and calcitonin gene-related peptide type 1 (CGRP1/CALCA). CALCR interacts with receptor-activity-modifying proteins RAMP1, 2 and 3 to form receptor complexes AMYR1, 2 and 3, respectively. IAPP, CT and CGRP1 activate CALCR and AMYRs with distinct modes of receptor activation resulting in specific phenotypes. Ligand binding causes a conformation change that triggers signaling via guanine nucleotide-binding proteins (G proteins) and modulates the activity of downstream effectors. Activates cAMP-dependent pathway. This is Calcitonin receptor from Mus musculus (Mouse).